The sequence spans 154 residues: UPF0260 protein NTHI1811 (154 aa).

The protein belongs to the UPF0260 family.

This chain is UPF0260 protein NTHI1811, found in Haemophilus influenzae (strain 86-028NP).